Reading from the N-terminus, the 626-residue chain is Chaperone protein DnaK (626 aa).

Position 197 is a phosphothreonine; by autocatalysis (T197). 2 stretches are compositionally biased toward basic and acidic residues: residues 512-528 (DAEA…EAVE) and 539-551 (QTEK…GEKI). 2 disordered regions span residues 512 to 551 (DAEA…GEKI) and 601 to 626 (DQNA…AEVE).

The protein belongs to the heat shock protein 70 family.

Functionally, acts as a chaperone. The polypeptide is Chaperone protein DnaK (Campylobacter fetus subsp. fetus (strain 82-40)).